A 194-amino-acid chain; its full sequence is N-acetyltransferase (194 aa).

The region spanning 9 to 173 (PQVRPGIAED…GRYWDVRWYE (165 aa)) is the N-acetyltransferase domain.

The protein belongs to the acetyltransferase family. PAT/BAR subfamily.

This Streptomyces griseus protein is N-acetyltransferase (nat).